The sequence spans 358 residues: Homoserine O-acetyltransferase (358 aa).

One can recognise an AB hydrolase-1 domain in the interval 41–343; sequence NAVLICHALT…DYGHDAFLVD (303 aa). The active-site Nucleophile is the Ser-143. Residue Arg-212 coordinates substrate. Residues Asp-304 and His-337 contribute to the active site. Asp-338 is a binding site for substrate.

Belongs to the AB hydrolase superfamily. MetX family. As to quaternary structure, homodimer.

The protein resides in the cytoplasm. The catalysed reaction is L-homoserine + acetyl-CoA = O-acetyl-L-homoserine + CoA. Its pathway is amino-acid biosynthesis; L-methionine biosynthesis via de novo pathway; O-acetyl-L-homoserine from L-homoserine: step 1/1. Functionally, transfers an acetyl group from acetyl-CoA to L-homoserine, forming acetyl-L-homoserine. The chain is Homoserine O-acetyltransferase from Haemophilus influenzae (strain 86-028NP).